A 313-amino-acid polypeptide reads, in one-letter code: Dimethyladenosine transferase (313 aa).

Residues 1-22 form a disordered region; sequence MPKIKSAASGRRRERQQQRGQL. His-37, Leu-39, Gly-64, Glu-85, Asp-113, and Asn-128 together coordinate S-adenosyl-L-methionine.

Belongs to the class I-like SAM-binding methyltransferase superfamily. rRNA adenine N(6)-methyltransferase family. Part of the small subunit (SSU) processome, composed of more than 70 proteins and the RNA chaperone small nucleolar RNA (snoRNA) U3.

It localises to the nucleus. It is found in the nucleoplasm. The protein resides in the nucleolus. The enzyme catalyses adenosine(1779)/adenosine(1780) in 18S rRNA + 4 S-adenosyl-L-methionine = N(6)-dimethyladenosine(1779)/N(6)-dimethyladenosine(1780) in 18S rRNA + 4 S-adenosyl-L-homocysteine + 4 H(+). Functionally, specifically dimethylates two adjacent adenosines in the loop of a conserved hairpin near the 3'-end of 18S rRNA in the 40S particle. Involved in the pre-rRNA processing steps leading to small-subunit rRNA production independently of its RNA-modifying catalytic activity. Part of the small subunit (SSU) processome, first precursor of the small eukaryotic ribosomal subunit. During the assembly of the SSU processome in the nucleolus, many ribosome biogenesis factors, an RNA chaperone and ribosomal proteins associate with the nascent pre-rRNA and work in concert to generate RNA folding, modifications, rearrangements and cleavage as well as targeted degradation of pre-ribosomal RNA by the RNA exosome. The polypeptide is Dimethyladenosine transferase (DIMT1) (Bos taurus (Bovine)).